We begin with the raw amino-acid sequence, 220 residues long: Superoxide dismutase [Fe] (220 aa).

4 residues coordinate Fe cation: histidine 26, histidine 73, aspartate 164, and histidine 168.

It belongs to the iron/manganese superoxide dismutase family. As to quaternary structure, homodimer. Requires Fe cation as cofactor.

The enzyme catalyses 2 superoxide + 2 H(+) = H2O2 + O2. Functionally, destroys superoxide anion radicals which are normally produced within the cells and which are toxic to biological systems. This Campylobacter coli protein is Superoxide dismutase [Fe] (sodB).